We begin with the raw amino-acid sequence, 73 residues long: UPF0435 protein lwe1727 (73 aa).

The protein belongs to the UPF0435 family.

This is UPF0435 protein lwe1727 from Listeria welshimeri serovar 6b (strain ATCC 35897 / DSM 20650 / CCUG 15529 / CIP 8149 / NCTC 11857 / SLCC 5334 / V8).